The primary structure comprises 126 residues: Holo-[acyl-carrier-protein] synthase (126 aa).

D9 and E58 together coordinate Mg(2+).

It belongs to the P-Pant transferase superfamily. AcpS family. The cofactor is Mg(2+).

Its subcellular location is the cytoplasm. It carries out the reaction apo-[ACP] + CoA = holo-[ACP] + adenosine 3',5'-bisphosphate + H(+). Its function is as follows. Transfers the 4'-phosphopantetheine moiety from coenzyme A to a Ser of acyl-carrier-protein. This Edwardsiella ictaluri (strain 93-146) protein is Holo-[acyl-carrier-protein] synthase.